The sequence spans 212 residues: Phosphatidylserine decarboxylase proenzyme (212 aa).

Ser182 (schiff-base intermediate with substrate; via pyruvic acid) is an active-site residue. Residue Ser182 is modified to Pyruvic acid (Ser); by autocatalysis.

It belongs to the phosphatidylserine decarboxylase family. PSD-A subfamily. As to quaternary structure, heterodimer of a large membrane-associated beta subunit and a small pyruvoyl-containing alpha subunit. It depends on pyruvate as a cofactor. Is synthesized initially as an inactive proenzyme. Formation of the active enzyme involves a self-maturation process in which the active site pyruvoyl group is generated from an internal serine residue via an autocatalytic post-translational modification. Two non-identical subunits are generated from the proenzyme in this reaction, and the pyruvate is formed at the N-terminus of the alpha chain, which is derived from the carboxyl end of the proenzyme. The post-translation cleavage follows an unusual pathway, termed non-hydrolytic serinolysis, in which the side chain hydroxyl group of the serine supplies its oxygen atom to form the C-terminus of the beta chain, while the remainder of the serine residue undergoes an oxidative deamination to produce ammonia and the pyruvoyl prosthetic group on the alpha chain.

The protein resides in the cell membrane. It carries out the reaction a 1,2-diacyl-sn-glycero-3-phospho-L-serine + H(+) = a 1,2-diacyl-sn-glycero-3-phosphoethanolamine + CO2. It participates in phospholipid metabolism; phosphatidylethanolamine biosynthesis; phosphatidylethanolamine from CDP-diacylglycerol: step 2/2. In terms of biological role, catalyzes the formation of phosphatidylethanolamine (PtdEtn) from phosphatidylserine (PtdSer). The sequence is that of Phosphatidylserine decarboxylase proenzyme from Pelodictyon phaeoclathratiforme (strain DSM 5477 / BU-1).